A 247-amino-acid polypeptide reads, in one-letter code: Putative trypsin-6 (247 aa).

The first 15 residues, 1–15 (MNPLLILAFVGAAVA), serve as a signal peptide directing secretion. The Peptidase S1 domain occupies 24–244 (IVGGYTCEEN…YVDWIKDTIA (221 aa)). Cys-48 and Cys-64 form a disulfide bridge. The active-site Charge relay system is the His-63. Ca(2+) is bound by residues Glu-75, Asn-77, Val-80, and Glu-85. Residue Asp-107 is the Charge relay system of the active site. 3 cysteine pairs are disulfide-bonded: Cys-139-Cys-206, Cys-171-Cys-185, and Cys-196-Cys-220. Ser-200 functions as the Charge relay system in the catalytic mechanism.

This sequence belongs to the peptidase S1 family. Tryptase subfamily. Overexpressed in metastasing in non small cell lung tumors, leading to an enhanced cell migration.

Its subcellular location is the secreted. The catalysed reaction is Preferential cleavage: Arg-|-Xaa, Lys-|-Xaa.. In terms of biological role, may regulate cell migration. The polypeptide is Putative trypsin-6 (PRSS3P2) (Homo sapiens (Human)).